Reading from the N-terminus, the 275-residue chain is tRNA pseudouridine synthase A (275 aa).

Aspartate 72 serves as the catalytic Nucleophile. Tyrosine 133 provides a ligand contact to substrate.

Belongs to the tRNA pseudouridine synthase TruA family. In terms of assembly, homodimer.

It catalyses the reaction uridine(38/39/40) in tRNA = pseudouridine(38/39/40) in tRNA. Formation of pseudouridine at positions 38, 39 and 40 in the anticodon stem and loop of transfer RNAs. The chain is tRNA pseudouridine synthase A from Gluconobacter oxydans (strain 621H) (Gluconobacter suboxydans).